Consider the following 498-residue polypeptide: Lycopene beta cyclase, chloroplastic/chromoplastic (498 aa).

Residues 1–79 (MDTLLRTPNN…ELPMYDPSKG (79 aa)) constitute a chloroplast and chromoplast transit peptide. 84–112 (LAVVGGGPAGLAVAQQVSEAGLSVCSIDP) lines the NAD(+) pocket. The FLEET motif motif lies at 293–297 (FLEET).

It belongs to the lycopene cyclase family. Monomer. Requires FAD as cofactor. It depends on NADPH as a cofactor.

The protein resides in the plastid. Its subcellular location is the chloroplast. The protein localises to the chromoplast. It catalyses the reaction a carotenoid psi-end group = a carotenoid beta-end derivative. It carries out the reaction all-trans-lycopene = gamma-carotene. The enzyme catalyses gamma-carotene = all-trans-beta-carotene. The catalysed reaction is all-trans-neurosporene = beta-zeacarotene. It catalyses the reaction beta-zeacarotene = 7,8-dihydro-beta-carotene. It participates in carotenoid biosynthesis; beta-carotene biosynthesis. The protein operates within carotenoid biosynthesis; beta-zeacarotene biosynthesis. Functionally, catalyzes the double cyclization reaction which converts lycopene to beta-carotene. Catalyzes the double cyclization reaction which converts neurosporene to 7,8-dihydro-beta-carotene. In Capsicum annuum (Capsicum pepper), this protein is Lycopene beta cyclase, chloroplastic/chromoplastic.